A 496-amino-acid chain; its full sequence is Cytochrome P450 71D180 (496 aa).

The chain crosses the membrane as a helical; Signal-anchor for type II membrane protein span at residues 1–21 (MDISISWVVIIVFVLSYLILM). Position 435 (Cys-435) interacts with heme.

Belongs to the cytochrome P450 family. The cofactor is heme. Mostly expressed in flowers and, to a lower extent, in leaves, especially in glandular trichomes.

It is found in the membrane. It carries out the reaction (4R)-limonene + reduced [NADPH--hemoprotein reductase] + O2 = (1R,5S)-carveol + oxidized [NADPH--hemoprotein reductase] + H2O + H(+). The catalysed reaction is (4S)-limonene + reduced [NADPH--hemoprotein reductase] + O2 = (1S,5R)-carveol + oxidized [NADPH--hemoprotein reductase] + H2O + H(+). The enzyme catalyses gamma-terpinene + 2 reduced [NADPH--hemoprotein reductase] + 2 O2 = carvacrol + 2 oxidized [NADPH--hemoprotein reductase] + 3 H2O + 2 H(+). It functions in the pathway secondary metabolite biosynthesis; terpenoid biosynthesis. Its function is as follows. Involved in the biosynthesis of phenolic monoterpenes natural products thymol and carvacrol which have a broad range of biological activities acting as antimicrobial compounds, insecticides, antioxidants and pharmaceutical agents. Catalyzes the C2-hydroxylation of gamma-terpinene to produce carvacrol. Mediates also the C6-hydroxylation of (4S)-limonene and (4R)-limonene to form carveol. This Thymus vulgaris (Thyme) protein is Cytochrome P450 71D180.